The chain runs to 471 residues: Coronin-6 (471 aa).

WD repeat units lie at residues 79–119, 129–169, 173–212, 216–259, and 264–304; these read GHTG…PVRN, GHSK…VLLS, IHPD…VVAE, PHEG…EPVA, and DTSN…PFVH. Positions 410–433 are disordered; the sequence is ILDVRPPASPRRSQSASEAPLSQH. A compositionally biased stretch (low complexity) spans 419–429; that stretch reads PRRSQSASEAP. A coiled-coil region spans residues 426–468; that stretch reads SEAPLSQHTLETLLEEIKALRDRVQAQEERITALENMLCELVD.

This Mus musculus (Mouse) protein is Coronin-6 (Coro6).